Reading from the N-terminus, the 233-residue chain is Membrane steroid-binding protein 2 (233 aa).

Residues 23–43 (AFFTVLALAFAVYQVVSGFFV) traverse the membrane as a helical segment. Residues 70–167 (EITEEELKLY…SKYVKVGTIQ (98 aa)) form the Cytochrome b5 heme-binding domain. The segment at 70 to 167 (EITEEELKLY…SKYVKVGTIQ (98 aa)) is steroid-binding. Basic and acidic residues-rich tracts occupy residues 169 to 181 (KDGE…EPSE) and 202 to 224 (THDE…KDVA). The interval 169-233 (KDGEGKESSE…ATDDDDAAKE (65 aa)) is disordered. T225 is subject to Phosphothreonine.

Belongs to the cytochrome b5 family. MAPR subfamily.

It is found in the cell membrane. This Arabidopsis thaliana (Mouse-ear cress) protein is Membrane steroid-binding protein 2 (MSBP2).